A 250-amino-acid polypeptide reads, in one-letter code: 3-deoxy-manno-octulosonate cytidylyltransferase (250 aa).

Belongs to the KdsB family.

It is found in the cytoplasm. The enzyme catalyses 3-deoxy-alpha-D-manno-oct-2-ulosonate + CTP = CMP-3-deoxy-beta-D-manno-octulosonate + diphosphate. It participates in nucleotide-sugar biosynthesis; CMP-3-deoxy-D-manno-octulosonate biosynthesis; CMP-3-deoxy-D-manno-octulosonate from 3-deoxy-D-manno-octulosonate and CTP: step 1/1. The protein operates within bacterial outer membrane biogenesis; lipopolysaccharide biosynthesis. Functionally, activates KDO (a required 8-carbon sugar) for incorporation into bacterial lipopolysaccharide in Gram-negative bacteria. This Rhizobium meliloti (strain 1021) (Ensifer meliloti) protein is 3-deoxy-manno-octulosonate cytidylyltransferase.